The primary structure comprises 162 residues: F protein (162 aa).

Residues M1–S23 form a disordered region. Residues N13–S23 show a composition bias toward polar residues.

It is found in the host cytoplasm. It localises to the host perinuclear region. The chain is F protein from Hepatitis C virus genotype 1a (isolate 1) (HCV).